The sequence spans 223 residues: Killer cell lectin-like receptor subfamily B member 1B allele B (223 aa).

Over 1–43 the chain is Cytoplasmic; the sequence is MDSTTLVYADLNLARIQEPKHDSPPSLSPDTCRCPRWHRLALK. Positions 6–11 match the ITIM motif motif; it reads LVYADL. The LCK-binding motif signature appears at 32–35; the sequence is CRCP. A helical; Signal-anchor for type II membrane protein membrane pass occupies residues 44-64; that stretch reads FGCAGLILLVLVVIGLCVLVL. Residues 65–223 are Extracellular-facing; it reads SVQKSSVQKI…LNHETPCNDS (159 aa). The region spanning 101-211 is the C-type lectin domain; the sequence is HRDKCFHVSQ…CSSDNRWICQ (111 aa). 2 disulfide bridges follow: Cys122/Cys210 and Cys189/Cys202.

As to quaternary structure, homodimer; disulfide-linked. Interacts with tyrosine kinase LCK. Binds PTPN6/SHP-1 in a phosphorylation-dependent manner. Expressed in NK cells and a subset of T-cells.

Its subcellular location is the membrane. In terms of biological role, receptor for CLEC2D/OCIL. Ligand-binding contributes to inhibition of cytotoxic natural killer (NK) cells. May mediate MHC class I-independent 'missing-self' recognition of allografts, tumor cells and virus-infected cells. The chain is Killer cell lectin-like receptor subfamily B member 1B allele B (Klrb1b) from Mus musculus (Mouse).